Here is a 493-residue protein sequence, read N- to C-terminus: Serine/threonine-protein kinase PBL34 (493 aa).

Disordered regions lie at residues 1–42 (MGLD…EEEE) and 84–117 (SKSA…TPVI). Gly-2 carries the N-myristoyl glycine lipid modification. Positions 12–37 (WKSEKPKETENKNHKKKNGDDNKSRN) are enriched in basic and acidic residues. The segment covering 100-114 (SSTTTTSNAESSSST) has biased composition (low complexity). Position 131 is a phosphothreonine (Thr-131). In terms of domain architecture, Protein kinase spans 142–428 (FRPESLLGEG…VEALKPLPHL (287 aa)). ATP-binding positions include 148–156 (LGEGGFGCV) and Lys-180. Tyr-225 bears the Phosphotyrosine mark. Asp-275 serves as the catalytic Proton acceptor. Residue Ser-279 is modified to Phosphoserine. Thr-306 carries the post-translational modification Phosphothreonine. Ser-309 is subject to Phosphoserine. Residues Thr-310 and Thr-315 each carry the phosphothreonine modification. Tyr-323 bears the Phosphotyrosine mark. The disordered stretch occupies residues 447-493 (KNGSGRSQGFGSRNGQHQPVFRTLSSPHGSSPYRHQIPSPKPKGATT). Residues 450–475 (SGRSQGFGSRNGQHQPVFRTLSSPHG) are compositionally biased toward polar residues.

Belongs to the protein kinase superfamily. Ser/Thr protein kinase family. Interacts with the Xanthomonas campestris effector XopAC/AvrAC. Interacts with SD129. Phosphorylated by SD129 at Thr-306 and Thr-310 in response to the pathogen-associated molecular pattern (PAMP) 3-OH-C10:0, a medium-chain 3-hydroxy fatty acid.

It localises to the cell membrane. It catalyses the reaction L-seryl-[protein] + ATP = O-phospho-L-seryl-[protein] + ADP + H(+). The catalysed reaction is L-threonyl-[protein] + ATP = O-phospho-L-threonyl-[protein] + ADP + H(+). In terms of biological role, involved in chitin-triggered immune signaling and is required for reactive oxygen species (ROS) production. Acts downstream of SD129 in defense signaling triggered by the pathogen-associated molecular pattern (PAMP) 3-OH-C10:0, a medium-chain 3-hydroxy fatty acid. The protein is Serine/threonine-protein kinase PBL34 of Arabidopsis thaliana (Mouse-ear cress).